The following is a 344-amino-acid chain: Glycerol-3-phosphate dehydrogenase [NAD(P)+] (344 aa).

4 residues coordinate NADPH: Trp11, Arg31, Arg32, and Lys105. Residues Lys105, Gly133, and Ser135 each contribute to the sn-glycerol 3-phosphate site. Ala137 contacts NADPH. Lys188, Asp241, Ser251, Arg252, and Asn253 together coordinate sn-glycerol 3-phosphate. Lys188 acts as the Proton acceptor in catalysis. Arg252 contributes to the NADPH binding site. Glu278 serves as a coordination point for NADPH.

The protein belongs to the NAD-dependent glycerol-3-phosphate dehydrogenase family.

The protein resides in the cytoplasm. It carries out the reaction sn-glycerol 3-phosphate + NAD(+) = dihydroxyacetone phosphate + NADH + H(+). It catalyses the reaction sn-glycerol 3-phosphate + NADP(+) = dihydroxyacetone phosphate + NADPH + H(+). It participates in membrane lipid metabolism; glycerophospholipid metabolism. Catalyzes the reduction of the glycolytic intermediate dihydroxyacetone phosphate (DHAP) to sn-glycerol 3-phosphate (G3P), the key precursor for phospholipid synthesis. The sequence is that of Glycerol-3-phosphate dehydrogenase [NAD(P)+] from Acidithiobacillus ferrooxidans (strain ATCC 23270 / DSM 14882 / CIP 104768 / NCIMB 8455) (Ferrobacillus ferrooxidans (strain ATCC 23270)).